The following is a 157-amino-acid chain: Protein Smg homolog (157 aa).

Belongs to the Smg family.

The sequence is that of Protein Smg homolog from Colwellia psychrerythraea (strain 34H / ATCC BAA-681) (Vibrio psychroerythus).